The primary structure comprises 938 residues: Glutamate receptor ionotropic, NMDA 1 (938 aa).

Residues 1 to 18 (MSTMRLLTLALLFSCSVA) form the signal peptide. The Extracellular segment spans residues 19-559 (RAACDPKIVN…TLDSFMQPFQ (541 aa)). Residues Asn-61, Asn-203, Asn-239, Asn-276, Asn-300, Asn-350, Asn-368, Asn-440, Asn-471, and Asn-491 are each glycosylated (N-linked (GlcNAc...) asparagine). Cysteines 79 and 308 form a disulfide. Disulfide bonds link Cys-420–Cys-454 and Cys-436–Cys-455. Pro-516, Thr-518, and Arg-523 together coordinate glycine. A helical transmembrane segment spans residues 560-580 (STLWLLVGLSVHVVAVMLYLL). The Cytoplasmic portion of the chain corresponds to 581 to 604 (DRFSPFGRFKVNSEEEEEDALTLS). Residues 603 to 624 (LSSAMWFSWGVLLNSGIGEGAP) are pore-forming. The segment at residues 605–615 (SAMWFSWGVLL) is an intramembrane region (discontinuously helical). The Cytoplasmic segment spans residues 616-627 (NSGIGEGAPRSF). The helical transmembrane segment at 628–648 (SARILGMVWAGFAMIIVASYT) threads the bilayer. Over 649 to 811 (ANLAAFLVLD…SNAPATLTFE (163 aa)) the chain is Extracellular. N-linked (GlcNAc...) asparagine glycosylation is present at Asn-674. Residues Ser-688 and Asp-732 each coordinate glycine. Cys-744 and Cys-798 form a disulfide bridge. A glycan (N-linked (GlcNAc...) asparagine) is linked at Asn-771. Residues 812 to 835 (NMAGVFMLVAGGIVAGIFLIFIEI) form a helical membrane-spanning segment. Residues 836 to 938 (AYKRHKDARR…LQLCSRHRES (103 aa)) are Cytoplasmic-facing. Phosphoserine; by PKC is present on residues Ser-889, Ser-890, Ser-896, and Ser-897. The disordered stretch occupies residues 889-938 (SSFKRRRSSKDTSTGGGRGALQNQKDTVLPRRAIEREEGQLQLCSRHRES). Basic and acidic residues predominate over residues 916–927 (VLPRRAIEREEG).

The protein belongs to the glutamate-gated ion channel (TC 1.A.10.1) family. NR1/GRIN1 subfamily. Heterotetramer; the NMDAR subunits are modular and harbor tiered domains that function in concert to regulate opening and closing of the cation-selective ion channel pore. Forms heterotetrameric channels composed of two GluN1/zeta subunits (GRIN1), and two identical GluN2/epsilon subunits (GRIN2A, GRIN2B, GRIN2C or GRIN2D) or GluN3 subunits (GRIN3A or GRIN3B) (in vitro). Can also form heterotetrameric channels that contain at least two GluN1 subunits and at least two different GluN2 subunits (or a combination of one GluN2 and one GluN3 subunits) (in vitro). In vivo, the subunit composition may vary in function of the expression levels of the different subunits. Found in a complex with GRIN2A or GRIN2B, GRIN3A and PPP2CB. Found in a complex with GRIN2A or GRIN2B and GRIN3B. Interacts with SNX27 (via PDZ domain); the interaction is required for recycling to the plasma membrane when endocytosed and prevent degradation in lysosomes. Interacts with DLG4 and MPDZ. Interacts with LRFN1 and LRFN2. Interacts with MYZAP. Found in a complex with DLG4 and PRR7. Found in a complex with GRIN2B and PRR7. Interacts with PRR7; the interaction is reduced following NMDA receptor activity. In terms of processing, NMDA is probably regulated by C-terminal phosphorylation of an isoform of GRIN1 by PKC. Dephosphorylated on Ser-897 probably by protein phosphatase 2A (PPP2CB). Its phosphorylated state is influenced by the formation of the NMDAR-PPP2CB complex and the NMDAR channel activity.

Its subcellular location is the cell membrane. The protein resides in the postsynaptic cell membrane. It is found in the postsynaptic density membrane. It localises to the synaptic cell membrane. It catalyses the reaction Ca(2+)(in) = Ca(2+)(out). The enzyme catalyses Na(+)(in) = Na(+)(out). It carries out the reaction K(+)(in) = K(+)(out). NMDA glutamate receptor activity is inhbited by Mg2(+) in a voltage-dependent manner; Mg2(+)-induced blockade occurs only at negative potentials and decreases with membrane depolarization. 7-chlorokynurenate (50 uM) or Zn2(+) (100 uM) partially inhibit the NMDA glutamate receptor activity, while acide 2-amino-5-phosphonovalerique(100 uM) almost completely blocked the NMDA glutamate receptor activity. Dizocilpine (1 uM) results in long lasting and almost complete block of the NMDA glutamate receptor activity. Its function is as follows. Component of N-methyl-D-aspartate (NMDA) receptors (NMDARs) that function as heterotetrameric, ligand-gated cation channels with high calcium permeability and voltage-dependent block by Mg(2+). NMDARs participate in synaptic plasticity for learning and memory formation by contributing to the long-term potentiation (LTP). Channel activation requires binding of the neurotransmitter L-glutamate to the GluN2 subunit, glycine or D-serine binding to the GluN1 subunit, plus membrane depolarization to eliminate channel inhibition by Mg(2+). NMDARs mediate simultaneously the potasium efflux and the influx of calcium and sodium. Each GluN2 or GluN3 subunit confers differential attributes to channel properties, including activation, deactivation and desensitization kinetics, pH sensitivity, Ca2(+) permeability, and binding to allosteric modulators. This is Glutamate receptor ionotropic, NMDA 1 from Homo sapiens (Human).